The following is a 2377-amino-acid chain: Serine/threonine-protein kinase WNK1 (2377 aa).

2 disordered regions span residues 1-79 and 93-203; these read MSDG…RFFR and LPGL…QQDD. 2 positions are modified to phosphothreonine: threonine 17 and threonine 58. Over residues 48–64 the composition is skewed to basic and acidic residues; that stretch reads RTEEYRRRRHTMDKDSR. Composition is skewed to low complexity over residues 101–111 and 127–141; these read PQPSVPAVVPQ and VASQVSQQPSAAASP. Over residues 149-158 the composition is skewed to polar residues; that stretch reads SATTTVPSST. Phosphoserine is present on residues serine 165 and serine 172. Positions 221–479 constitute a Protein kinase domain; it reads LKFDIEIGRG…IKDLLNHAFF (259 aa). Residue serine 231 participates in ATP binding. Residues phenylalanine 283 and leucine 299 each coordinate chloride. Residues 301–304 and lysine 351 contribute to the ATP site; that span reads TELM. Aspartate 368 (proton acceptor) is an active-site residue. Residues leucine 369 and leucine 371 each coordinate chloride. Serine 378 and serine 382 each carry phosphoserine; by autocatalysis. Residues 488 to 555 are autoinhibitory domain; that stretch reads ELAEEDDGEK…VCEGDHKTMA (68 aa). Basic and acidic residues predominate over residues 573 to 588; sequence QLVREEQEKRKQEESS. Disordered stretches follow at residues 573–782 and 1013–1114; these read QLVR…SAGT and PAVS…SRPK. 3 stretches are compositionally biased toward polar residues: residues 593 to 628, 638 to 705, and 713 to 733; these read NEQQASVSQAGIQQLSAASTGIPTAPATSASVSTQV, HQQL…QSQP, and SMAQGQNQGQPSSSLAGVLSS. The segment at 629–639 is interaction with KLHL3; it reads EPEEPEADQHQ. A compositionally biased stretch (low complexity) spans 734–746; that stretch reads QPIQHPQQQGIQP. A compositionally biased stretch (polar residues) spans 747–782; it reads TVPSQQAVQYSLPQAASSSEGTTAQPVSQPQVSAGT. The segment covering 1018-1028 has biased composition (low complexity); sequence TQQPPTTSSQQ. Positions 1029 to 1038 are enriched in polar residues; that stretch reads AVLESTQGVS. Residues 1042 to 1058 show a composition bias toward low complexity; the sequence is PPEQTPITQSQPTQPVP. The segment covering 1075–1085 has biased composition (polar residues); it reads SDGNENAPSSS. Basic residues predominate over residues 1093–1114; it reads TKRHYRKSVRSRSRHEKTSRPK. The short motif at 1252–1255 is the RFXV motif 1 element; it reads RFIV. Serine 1256 is modified (phosphoserine). 2 disordered regions span residues 1726–1760 and 1818–1847; these read GQVSTPGTHASAPVGTATGVKPGTTPPKPTKTVVP and TMSSTTVTEAGTRLQKDGTEGHVTATSSGA. Low complexity predominate over residues 1738–1748; that stretch reads PVGTATGVKPG. Threonine 1843 is subject to Phosphothreonine. Positions 1854–1857 match the RFXV motif 2 motif; sequence RFQV. The interval 1860 to 1945 is disordered; that stretch reads TMDDAQKERK…TKVGRFQVTT (86 aa). The segment covering 1863-1879 has biased composition (basic and acidic residues); that stretch reads DAQKERKNRSEDTKSVH. Low complexity predominate over residues 1882 to 1900; sequence SSTSESSVLSSSSPESTLV. 2 consecutive short sequence motifs (RFXV motif) follow at residues 1940 to 1943 and 1952 to 1955; these read RFQV and RFSV. Basic and acidic residues predominate over residues 1959 to 1969; it reads EDKVTELKKEG. 5 disordered regions span residues 1959–1984, 1989–2008, 2015–2064, 2107–2191, and 2203–2239; these read EDKVTELKKEGPVTSPPFRDSEQTVI, PKKEKPELAEPSHLNGPSSD, SRGT…DIED, VIIP…NLYS, and SLSAPGQGTSSTNTVGGTVSSQAAQAQPPAMTSSRKG. Serine 1973 carries the post-translational modification Phosphoserine. Residues 1989 to 1998 are compositionally biased toward basic and acidic residues; that stretch reads PKKEKPELAE. Phosphoserine occurs at positions 2006, 2007, 2022, 2024, and 2027. Residues 2035 to 2057 are compositionally biased toward low complexity; it reads SLPVQNLSQSLSNSFNSSYMSSD. At serine 2116 the chain carries Phosphoserine. Over residues 2117 to 2129 the composition is skewed to basic residues; that stretch reads GRRRRPTKSKGSK. The span at 2130-2140 shows a compositional bias: low complexity; that stretch reads SSRSSSLGNKS. Residues 2141–2191 are compositionally biased toward polar residues; that stretch reads PQLSGNLSGQSGTSVLHPQQTLHPAGNTPETGHNQLLQPLKPSPSSDNLYS. A compositionally biased stretch (low complexity) spans 2208–2232; the sequence is GQGTSSTNTVGGTVSSQAAQAQPPA. The interval 2236 to 2256 is amphipathic alpha-helix; it reads SRKGTFTDDLHKLVDNWARDA. Residues serine 2265 and serine 2281 each carry the phosphoserine modification. The disordered stretch occupies residues 2325–2344; it reads PAPFGTQWSGTGGPAPQPLG. Serine 2365 and serine 2367 each carry phosphoserine.

The protein belongs to the protein kinase superfamily. Ser/Thr protein kinase family. WNK subfamily. As to quaternary structure, interacts with WNK3. Interacts with WNK4; inhibiting the activity of WNK4. Interacts with SGK1; promoting its activation. Associates with the mTORC2 complex. Interacts with UVRAG. Interacts with isoform 1; inhibiting isoform 1 activity. Requires Mg(2+) as cofactor. In terms of processing, autophosphorylated at Ser-378 and Ser-382, promoting its activity. Autophosphorylation at Ser-382 is inhibited by intracellular calcium. Phosphorylation at Thr-58 increases ability to activate SGK1. Ubiquitinated by the BCR(KLHL3) complex, leading to its degradation. Also ubiquitinated by the BCR(KLHL2) complex. Post-translationally, may be O-glycosylated. Widely expressed in both adult and embryonic tissue, with highest levels observed in the testis and lower levels in heart, lung, kidney, placenta, brain and skeletal muscle. Expressed in pancreatic duct. Two isoforms are expressed in heart, a single shorter isoform in the kidney. Locates to the distal convoluted tubule, the medullary collecting duct and the cortical collecting duct of the kidney. In terms of tissue distribution, restricted to the nervous system, expressed preferentially in sensory neurons than in motor neurons and in general more abundant in axons than in cell bodies (at protein level). In the DRG, predominantly expressed in the satellite cells that envelop sensory neurons, but low expression also observed in the cell bodies of neurons (at protein level). In the sciatic nerve, expressed in the Schwann cells that surround axons and in a mosaic distribution of axons (at protein level). In the spinal cord, expressed in superficial layers (LI and LII), as well as in the fibers of the Lissauer tract (at protein level). Also detected in the axon fibers of dorsolateral funiculus and lateral funiculus (at protein level).

The protein resides in the cytoplasm. It is found in the nucleus. The protein localises to the cytoskeleton. Its subcellular location is the spindle. It carries out the reaction L-seryl-[protein] + ATP = O-phospho-L-seryl-[protein] + ADP + H(+). It catalyses the reaction L-threonyl-[protein] + ATP = O-phospho-L-threonyl-[protein] + ADP + H(+). With respect to regulation, activated in response to hyperosmotic stress: cell shrinkage promotes formation of a membraneless compartment that concentrates WNK1 with its substrates, OXSR1/OSR1 and STK39/SPAK. Activation requires autophosphorylation of Ser-382 and, to a lower extent, Ser-378. Autophosphorylation and subsequent activation is inhibited by increases in intracellular ionic strength: Cl(-) potently inhibits WNK1 kinase activity via direct binding. Also inhibited by K(+) ions. Its function is as follows. Serine/threonine-protein kinase component of the WNK1-SPAK/OSR1 kinase cascade, which acts as a key regulator of blood pressure and regulatory volume increase by promoting ion influx. WNK1 mediates regulatory volume increase in response to hyperosmotic stress by acting as a molecular crowding sensor, which senses cell shrinkage and mediates formation of a membraneless compartment by undergoing liquid-liquid phase separation. The membraneless compartment concentrates WNK1 with its substrates, OXSR1/OSR1 and STK39/SPAK, promoting WNK1-dependent phosphorylation and activation of downstream kinases OXSR1/OSR1 and STK39/SPAK. Following activation, OXSR1/OSR1 and STK39/SPAK catalyze phosphorylation of ion cotransporters SLC12A1/NKCC2, SLC12A2/NKCC1, SLC12A5/KCC2 and SLC12A6/KCC3, regulating their activity. Phosphorylation of Na-K-Cl cotransporters SLC12A2/NKCC1 and SLC12A2/NKCC1 promote their activation and ion influx; simultaneously, phosphorylation of K-Cl cotransporters SLC12A5/KCC2 and SLC12A6/KCC3 inhibit their activity, blocking ion efflux. Also acts as a regulator of angiogenesis in endothelial cells. Also acts independently of the WNK1-SPAK/OSR1 kinase cascade by catalyzing phosphorylation of other substrates, such as SYT2, PCF11 and NEDD4L. Mediates phosphorylation of SYT2, regulating SYT2 association with phospholipids and membrane-binding. Regulates mRNA export in the nucleus by mediating phosphorylation of PCF11, thereby decreasing the association between PCF11 and POLR2A/RNA polymerase II and promoting mRNA export to the cytoplasm. Acts as a negative regulator of autophagy. Required for the abscission step during mitosis, independently of the WNK1-SPAK/OSR1 kinase cascade. WNK1 may also play a role in actin cytoskeletal reorganization. Also acts as a scaffold protein independently of its protein kinase activity: negatively regulates cell membrane localization of various transporters and channels, such as SLC4A4, SLC26A6, SLC26A9, TRPV4 and CFTR. Involved in the regulation of epithelial Na(+) channel (ENaC) by promoting activation of SGK1 in a kinase-independent manner: probably acts as a scaffold protein that promotes the recruitment of SGK1 to the mTORC2 complex in response to chloride, leading to mTORC2-dependent phosphorylation and activation of SGK1. Acts as an assembly factor for the ER membrane protein complex independently of its protein kinase activity: associates with EMC2 in the cytoplasm via its amphipathic alpha-helix, and prevents EMC2 ubiquitination and subsequent degradation, thereby promoting EMC2 stabilization. Kinase-defective isoform specifically expressed in kidney, which acts as a dominant-negative regulator of the longer isoform 1. Does not directly inhibit WNK4 and has no direct effect on sodium and chloride ion transport. Down-regulates sodium-chloride cotransporter activity indirectly by inhibiting isoform 1, it associates with isoform 1 and attenuates its kinase activity. In kidney, may play an important role regulating sodium and potassium balance. In Mus musculus (Mouse), this protein is Serine/threonine-protein kinase WNK1.